The primary structure comprises 122 residues: Basic phospholipase A2 CbII (122 aa).

7 disulfides stabilise this stretch: Cys-26–Cys-115, Cys-28–Cys-44, Cys-43–Cys-95, Cys-49–Cys-122, Cys-50–Cys-88, Cys-57–Cys-81, and Cys-75–Cys-86. Residues Tyr-27, Gly-29, and Gly-31 each contribute to the Ca(2+) site. His-47 is a catalytic residue. Residue Asp-48 participates in Ca(2+) binding. Residue Asp-89 is part of the active site.

It belongs to the phospholipase A2 family. Group I subfamily. D49 sub-subfamily. Heterodimer of an acidic subunit (CbIalpha or CbIbeta) and a basic subunit (CbII). The acidic subunit is non-toxic, and increases the toxicity of the basic subunit. The cofactor is Ca(2+). In terms of tissue distribution, expressed by the venom gland.

The protein resides in the secreted. It catalyses the reaction a 1,2-diacyl-sn-glycero-3-phosphocholine + H2O = a 1-acyl-sn-glycero-3-phosphocholine + a fatty acid + H(+). Functionally, heterodimer: presynaptic neurotoxin. In terms of biological role, monomer: Snake venom phospholipase A2 (PLA2) that exhibits strong anticoagulant effects by binding to factor Xa (F10) and inhibiting the prothrombinase activity (IC(50) is 20 nM). PLA2 catalyzes the calcium-dependent hydrolysis of the 2-acyl groups in 3-sn-phosphoglycerides. In Pseudocerastes fieldi (Field's horned viper), this protein is Basic phospholipase A2 CbII.